Here is a 312-residue protein sequence, read N- to C-terminus: MSTGHTVLGCQTTDKTVVTLFIILVLLCLVAVVGNGFIIIALGMKWLLRRTLSAHNKLLISLAASRFCLQCVVIGKNIYVFLNPTSFPYNPVIQLLNLMWDFLTAATIWLCSLLGFFYCVKIATLTHPVFVWLKYRLPGWVPWMLLSAVGMSSLTSILCFIGNYMIYQNHAKSGHQPWNVTGNSLRHSLEKFYFFSIKIIMWTIPTVVFSIFMSLLLVSLVRHMKKTFLALSELRDVWAQAHFKALLPLLSFIVLFISCFLTLVLSSASNTPYQEFRYWMWQVVIHLCTVIHPIVILFSNPVLRVVIKRGCC.

Over 1–19 the chain is Extracellular; that stretch reads MSTGHTVLGCQTTDKTVVT. Residues 20-40 traverse the membrane as a helical segment; sequence LFIILVLLCLVAVVGNGFIII. Over 41-66 the chain is Cytoplasmic; it reads ALGMKWLLRRTLSAHNKLLISLAASR. The helical transmembrane segment at 67-87 threads the bilayer; sequence FCLQCVVIGKNIYVFLNPTSF. Residues 88 to 97 lie on the Extracellular side of the membrane; it reads PYNPVIQLLN. Residues 98–118 traverse the membrane as a helical segment; the sequence is LMWDFLTAATIWLCSLLGFFY. Residues 119-140 lie on the Cytoplasmic side of the membrane; the sequence is CVKIATLTHPVFVWLKYRLPGW. The chain crosses the membrane as a helical span at residues 141–161; sequence VPWMLLSAVGMSSLTSILCFI. The Extracellular segment spans residues 162–198; sequence GNYMIYQNHAKSGHQPWNVTGNSLRHSLEKFYFFSIK. An N-linked (GlcNAc...) asparagine glycan is attached at N179. The helical transmembrane segment at 199 to 219 threads the bilayer; sequence IIMWTIPTVVFSIFMSLLLVS. Residues 220–244 lie on the Cytoplasmic side of the membrane; it reads LVRHMKKTFLALSELRDVWAQAHFK. Residues 245-265 form a helical membrane-spanning segment; the sequence is ALLPLLSFIVLFISCFLTLVL. Residues 266 to 277 are Extracellular-facing; the sequence is SSASNTPYQEFR. Residues 278–298 traverse the membrane as a helical segment; sequence YWMWQVVIHLCTVIHPIVILF. Residues 299–312 are Cytoplasmic-facing; sequence SNPVLRVVIKRGCC.

The protein belongs to the G-protein coupled receptor T2R family.

It is found in the membrane. In terms of biological role, putative taste receptor which may play a role in the perception of bitterness. This chain is Taste receptor type 2 member 135 (Tas2r135), found in Mus musculus (Mouse).